The primary structure comprises 591 residues: Lipoprotein LpqB (591 aa).

The signal sequence occupies residues methionine 1–glycine 20. Cysteine 21 carries N-palmitoyl cysteine lipidation. Cysteine 21 is lipidated: S-diacylglycerol cysteine.

This sequence belongs to the LpqB lipoprotein family.

The protein resides in the cell membrane. In Cutibacterium acnes (strain DSM 16379 / KPA171202) (Propionibacterium acnes), this protein is Lipoprotein LpqB.